Reading from the N-terminus, the 1034-residue chain is DNA polymerase I B, chloroplastic/mitochondrial (1034 aa).

The N-terminal 55 residues, 1 to 55, are a transit peptide targeting the chloroplast and mitochondrion; it reads MGVSLRHLSPSSFWVSRRPRVSSSILSFLVPRRRILCTRKVAIIKGNAGYSTATD. Positions 270–468 constitute a 3'-5' exonuclease domain; the sequence is ACDTEVSRID…LYESMKKQLQ (199 aa). Residues 700–1030 are polymerase; sequence HAIAALCEVC…SVDAKCAQNW (331 aa).

Belongs to the DNA polymerase type-A family. In terms of tissue distribution, expressed in shoot apical meristem.

Its subcellular location is the mitochondrion. The protein resides in the plastid. It localises to the chloroplast. It catalyses the reaction DNA(n) + a 2'-deoxyribonucleoside 5'-triphosphate = DNA(n+1) + diphosphate. Its activity is regulated as follows. Not inhibited by aphidicolin. In terms of biological role, in addition to polymerase activity, this DNA polymerase exhibits 5'-3' exonuclease activity. Required for DNA replication and accumulation in plastids and mitochondria. The polypeptide is DNA polymerase I B, chloroplastic/mitochondrial (POLIB) (Arabidopsis thaliana (Mouse-ear cress)).